Here is a 163-residue protein sequence, read N- to C-terminus: MEQKVSADVLLNKYQTSISITKNLINSWLGNENTSVSSDEKNDDPPLQARPPRLGLGASRKDQSENSWVTSKNEKLKSLPPALKKKIERQLQKKKEAEKIEGGKNHDNLKRKLNKVGDELNEQQSDTDDDDDDSKARITSRSKRANAQSSGFDIYKKLGKKKR.

Positions 30 to 163 (GNENTSVSSD…IYKKLGKKKR (134 aa)) are disordered. Positions 88–118 (ERQLQKKKEAEKIEGGKNHDNLKRKLNKVGD) are enriched in basic and acidic residues. Residues 119–133 (ELNEQQSDTDDDDDD) show a composition bias toward acidic residues. A Phosphoserine modification is found at serine 125. Position 127 is a phosphothreonine (threonine 127).

It is found in the nucleus. The protein resides in the nucleolus. This is an uncharacterized protein from Schizosaccharomyces pombe (strain 972 / ATCC 24843) (Fission yeast).